A 131-amino-acid chain; its full sequence is Small ribosomal subunit protein eS24 (131 aa).

Methionine 1 carries the N-acetylmethionine modification. At threonine 9 the chain carries Phosphothreonine. Residue lysine 37 forms a Glycyl lysine isopeptide (Lys-Gly) (interchain with G-Cter in SUMO2) linkage. Residues 90–100 (RLARHGLYEKK) are compositionally biased toward basic and acidic residues. The interval 90–131 (RLARHGLYEKKKTSRKQRKERKNRMKKVRGTAKANVGAGKKK) is disordered. Basic residues predominate over residues 101-119 (KTSRKQRKERKNRMKKVRG).

The protein belongs to the eukaryotic ribosomal protein eS24 family. As to quaternary structure, component of the small ribosomal subunit. Part of the small subunit (SSU) processome, composed of more than 70 proteins and the RNA chaperone small nucleolar RNA (snoRNA) U3.

The protein localises to the cytoplasm. Its subcellular location is the nucleus. The protein resides in the nucleolus. Component of the small ribosomal subunit. The ribosome is a large ribonucleoprotein complex responsible for the synthesis of proteins in the cell. Required for processing of pre-rRNA and maturation of 40S ribosomal subunits. Part of the small subunit (SSU) processome, first precursor of the small eukaryotic ribosomal subunit. During the assembly of the SSU processome in the nucleolus, many ribosome biogenesis factors, an RNA chaperone and ribosomal proteins associate with the nascent pre-rRNA and work in concert to generate RNA folding, modifications, rearrangements and cleavage as well as targeted degradation of pre-ribosomal RNA by the RNA exosome. This Pongo abelii (Sumatran orangutan) protein is Small ribosomal subunit protein eS24 (RPS24).